The following is a 473-amino-acid chain: 1-deoxy-D-xylulose 5-phosphate reductoisomerase, chloroplastic (473 aa).

The N-terminal 49 residues, 1–49 (MALKVVSFPGDLAAVSFLDSNRGGAFNQLKVDLPFQTRDRRAVSLRRTC), are a transit peptide targeting the chloroplast. Positions 85, 86, 87, 88, 111, 113, and 199 each coordinate NADPH. Residue Lys200 coordinates 1-deoxy-D-xylulose 5-phosphate. Residue Glu201 participates in NADPH binding. Position 225 (Asp225) interacts with Mn(2+). Ser226, Glu227, Ser251, and His274 together coordinate 1-deoxy-D-xylulose 5-phosphate. Residue Glu227 participates in Mn(2+) binding. Gly280 contacts NADPH. 4 residues coordinate 1-deoxy-D-xylulose 5-phosphate: Ser287, Asn292, Lys293, and Glu296. Glu296 provides a ligand contact to Mn(2+).

It belongs to the DXR family. Mn(2+) is required as a cofactor. Mg(2+) serves as cofactor.

The protein localises to the plastid. It localises to the chloroplast stroma. The enzyme catalyses 2-C-methyl-D-erythritol 4-phosphate + NADP(+) = 1-deoxy-D-xylulose 5-phosphate + NADPH + H(+). It participates in isoprenoid biosynthesis; isopentenyl diphosphate biosynthesis via DXP pathway; isopentenyl diphosphate from 1-deoxy-D-xylulose 5-phosphate: step 1/6. Enzyme of the plastid non-mevalonate pathway for isoprenoid biosynthesis that catalyzes the NADPH-dependent rearrangement and reduction of 1-deoxy-D-xylulose-5-phosphate (DXP) to 2-C-methyl-D-erythritol 4-phosphate (MEP). Required for chloroplast development. In Oryza sativa subsp. japonica (Rice), this protein is 1-deoxy-D-xylulose 5-phosphate reductoisomerase, chloroplastic (DXR).